A 460-amino-acid chain; its full sequence is Ribosomal protein uS12 methylthiotransferase RimO (460 aa).

Residues 9 to 119 (PKVGFVSLGC…VMEAVHAALP (111 aa)) enclose the MTTase N-terminal domain. Residues cysteine 18, cysteine 54, cysteine 83, cysteine 150, cysteine 154, and cysteine 157 each contribute to the [4Fe-4S] cluster site. The 239-residue stretch at 136 to 374 (LTPRHYAYLK…AKQAEISALR (239 aa)) folds into the Radical SAM core domain. The TRAM domain maps to 376 to 444 (EAKIGSVQQC…EHDLFGDALP (69 aa)).

Belongs to the methylthiotransferase family. RimO subfamily. Requires [4Fe-4S] cluster as cofactor.

It localises to the cytoplasm. The catalysed reaction is L-aspartate(89)-[ribosomal protein uS12]-hydrogen + (sulfur carrier)-SH + AH2 + 2 S-adenosyl-L-methionine = 3-methylsulfanyl-L-aspartate(89)-[ribosomal protein uS12]-hydrogen + (sulfur carrier)-H + 5'-deoxyadenosine + L-methionine + A + S-adenosyl-L-homocysteine + 2 H(+). Catalyzes the methylthiolation of an aspartic acid residue of ribosomal protein uS12. The sequence is that of Ribosomal protein uS12 methylthiotransferase RimO from Xanthomonas oryzae pv. oryzae (strain PXO99A).